Reading from the N-terminus, the 383-residue chain is MHC class I polypeptide-related sequence A (383 aa).

The first 23 residues, 1–23 (MGLGPVFLLLAGIFPFAPPGAAA), serve as a signal peptide directing secretion. Topologically, residues 24–307 (EPHSLRYNLT…GKVLVLQSHW (284 aa)) are extracellular. N-linked (GlcNAc...) asparagine glycosylation occurs at Asn-31. Cys-59 and Cys-64 are disulfide-bonded. Residue Asn-79 is glycosylated (N-linked (GlcNAc...) asparagine). The cysteines at positions 119 and 187 are disulfide-linked. In terms of domain architecture, Ig-like C1-type spans 207–296 (PMVNVTRSEA…SGNHSTHPVP (90 aa)). Residues Asn-210, Asn-220, and Asn-261 are each glycosylated (N-linked (GlcNAc...) asparagine). A disulfide bridge links Cys-225 with Cys-282. The chain crosses the membrane as a helical span at residues 308–328 (QTFHVSAVAAAAIFVIIIFYV). At 329–383 (RCCKKKTSAAEGPELVSLQVLDQHPVGTSDHRDATQLGFQPLMSDLGSTGSTEGA) the chain is on the cytoplasmic side. 2 S-palmitoyl cysteine lipidation sites follow: Cys-330 and Cys-331.

Belongs to the MHC class I family. MIC subfamily. Unlike classical MHC class I molecules, does not form a heterodimer with beta-2-microglobulin. Binds as a monomer to a KLRK1/NKG2D homodimer. KLRK1 forms a complex with HCST/DAP10 in which KLRK1 binds MICA while HCST acts as an adapter molecule which enables signal transduction. Interacts with PDIA6 on the surface of tumor cells, leading to disulfide bond reduction which is required for release of MICA from tumor cells. In terms of assembly, (Microbial infection) Interacts with human cytomegalovirus/HHV-5 protein UL142. Post-translationally, N-glycosylated. Glycosylation is not essential for interaction with KLRK1/NKG2D but enhances complex formation. In terms of processing, proteolytically cleaved and released from the cell surface of tumor cells which impairs KLRK1/NKG2D expression and T-cell activation. Palmitoylated on cysteine residues in the cytoplasmic tail leading to its association with membrane microdomains enriched in cholesterol. Post-translationally, N-glycosylation is necessary for cell surface expression. In terms of processing, (Microbial infection) Ubiquitinated by human herpesvirus 8 protein K5, leading to degradation. Widely expressed with the exception of the central nervous system where it is absent. Expressed predominantly in gastric epithelium and also in monocytes, keratinocytes, endothelial cells, fibroblasts and in the outer layer of Hassal's corpuscles within the medulla of normal thymus. In skin, expressed mainly in the keratin layers, basal cells, ducts and follicles. Also expressed in many, but not all, epithelial tumors of lung, breast, kidney, ovary, prostate and colon. In thyomas, overexpressed in cortical and medullar epithelial cells. Tumors expressing MICA display increased levels of gamma delta T-cells.

It localises to the cell membrane. Its subcellular location is the cytoplasm. Its function is as follows. Widely expressed membrane-bound protein which acts as a ligand to stimulate an activating receptor KLRK1/NKG2D, expressed on the surface of essentially all human natural killer (NK), gammadelta T and CD8 alphabeta T-cells. Up-regulated in stressed conditions, such as viral and bacterial infections or DNA damage response, serves as signal of cellular stress, and engagement of KLRK1/NKG2D by MICA triggers NK-cells resulting in a range of immune effector functions, such as cytotoxicity and cytokine production. The polypeptide is MHC class I polypeptide-related sequence A (Homo sapiens (Human)).